The following is a 77-amino-acid chain: Exodeoxyribonuclease 7 small subunit (77 aa).

It belongs to the XseB family. As to quaternary structure, heterooligomer composed of large and small subunits.

It is found in the cytoplasm. The enzyme catalyses Exonucleolytic cleavage in either 5'- to 3'- or 3'- to 5'-direction to yield nucleoside 5'-phosphates.. Bidirectionally degrades single-stranded DNA into large acid-insoluble oligonucleotides, which are then degraded further into small acid-soluble oligonucleotides. This chain is Exodeoxyribonuclease 7 small subunit, found in Clostridium acetobutylicum (strain ATCC 824 / DSM 792 / JCM 1419 / IAM 19013 / LMG 5710 / NBRC 13948 / NRRL B-527 / VKM B-1787 / 2291 / W).